Reading from the N-terminus, the 72-residue chain is Translation initiation factor IF-1 (72 aa).

The S1-like domain maps to 1 to 72 (MAKEEVLEFP…TKGRITYRFK (72 aa)).

This sequence belongs to the IF-1 family. In terms of assembly, component of the 30S ribosomal translation pre-initiation complex which assembles on the 30S ribosome in the order IF-2 and IF-3, IF-1 and N-formylmethionyl-tRNA(fMet); mRNA recruitment can occur at any time during PIC assembly.

Its subcellular location is the cytoplasm. Its function is as follows. One of the essential components for the initiation of protein synthesis. Stabilizes the binding of IF-2 and IF-3 on the 30S subunit to which N-formylmethionyl-tRNA(fMet) subsequently binds. Helps modulate mRNA selection, yielding the 30S pre-initiation complex (PIC). Upon addition of the 50S ribosomal subunit IF-1, IF-2 and IF-3 are released leaving the mature 70S translation initiation complex. The sequence is that of Translation initiation factor IF-1 from Sinorhizobium medicae (strain WSM419) (Ensifer medicae).